The sequence spans 214 residues: uncharacterized protein (214 aa).

This is an uncharacterized protein from Rhodobacter capsulatus (Rhodopseudomonas capsulata).